Here is a 160-residue protein sequence, read N- to C-terminus: Putative UPF0479 protein YBL113W-A (160 aa).

Helical transmembrane passes span 39 to 59 and 136 to 156; these read IVFC…KVLQ and VPMI…ISQH.

Belongs to the UPF0479 family.

The protein localises to the membrane. The polypeptide is Putative UPF0479 protein YBL113W-A (Saccharomyces cerevisiae (strain ATCC 204508 / S288c) (Baker's yeast)).